The primary structure comprises 725 residues: Malate synthase G 2 (725 aa).

Residues V118, 125-126, S276, and R313 contribute to the acetyl-CoA site; that span reads RY. Catalysis depends on R340, which acts as the Proton acceptor. Residues R340, E429, and 454–457 contribute to the glyoxylate site; that span reads GFLD. 2 residues coordinate Mg(2+): E429 and D457. Acetyl-CoA is bound at residue P538. C619 carries the post-translational modification Cysteine sulfenic acid (-SOH). D633 functions as the Proton donor in the catalytic mechanism.

It belongs to the malate synthase family. GlcB subfamily. Monomer. Mg(2+) is required as a cofactor.

Its subcellular location is the cytoplasm. It carries out the reaction glyoxylate + acetyl-CoA + H2O = (S)-malate + CoA + H(+). Its pathway is carbohydrate metabolism; glyoxylate cycle; (S)-malate from isocitrate: step 2/2. Involved in the glycolate utilization. Catalyzes the condensation and subsequent hydrolysis of acetyl-coenzyme A (acetyl-CoA) and glyoxylate to form malate and CoA. The polypeptide is Malate synthase G 2 (Pseudomonas syringae pv. tomato (strain ATCC BAA-871 / DC3000)).